The following is a 628-amino-acid chain: tRNA uridine 5-carboxymethylaminomethyl modification enzyme MnmG (628 aa).

13 to 18 (GAGHAG) contributes to the FAD binding site. 273 to 287 (GPRYCPSIEDKIVRF) lines the NAD(+) pocket.

The protein belongs to the MnmG family. As to quaternary structure, homodimer. Heterotetramer of two MnmE and two MnmG subunits. FAD is required as a cofactor.

Its subcellular location is the cytoplasm. Functionally, NAD-binding protein involved in the addition of a carboxymethylaminomethyl (cmnm) group at the wobble position (U34) of certain tRNAs, forming tRNA-cmnm(5)s(2)U34. The sequence is that of tRNA uridine 5-carboxymethylaminomethyl modification enzyme MnmG from Buchnera aphidicola subsp. Acyrthosiphon pisum (strain 5A).